The following is a 166-amino-acid chain: Large ribosomal subunit protein uL10 (166 aa).

Belongs to the universal ribosomal protein uL10 family. As to quaternary structure, part of the ribosomal stalk of the 50S ribosomal subunit. The N-terminus interacts with L11 and the large rRNA to form the base of the stalk. The C-terminus forms an elongated spine to which L12 dimers bind in a sequential fashion forming a multimeric L10(L12)X complex.

Its function is as follows. Forms part of the ribosomal stalk, playing a central role in the interaction of the ribosome with GTP-bound translation factors. The sequence is that of Large ribosomal subunit protein uL10 from Listeria monocytogenes serotype 4b (strain CLIP80459).